An 84-amino-acid polypeptide reads, in one-letter code: Delta-conotoxin-like MVIB (84 aa).

Positions 1-22 are cleaved as a signal peptide; sequence MKLTCVMIVAVLFLTAWTFVTA. A propeptide spanning residues 23 to 51 is cleaved from the precursor; it reads DDSRYGLKDLFPKERHEMKNPEASKLNQR. Disulfide bonds link cysteine 54-cysteine 69, cysteine 61-cysteine 73, and cysteine 68-cysteine 77. Proline 65 carries the post-translational modification 4-hydroxyproline. Position 83 is a serine amide (serine 83).

This sequence belongs to the conotoxin O1 superfamily. Expressed by the venom duct.

The protein resides in the secreted. Delta-conotoxins bind to site 6 of voltage-gated sodium channels (Nav) and inhibit the inactivation process. This chain is Delta-conotoxin-like MVIB, found in Conus magus (Magical cone).